A 359-amino-acid chain; its full sequence is Quinolinate synthase (359 aa).

Residues H81 and S99 each coordinate iminosuccinate. C144 serves as a coordination point for [4Fe-4S] cluster. Iminosuccinate-binding positions include 170–172 and S187; that span reads YVN. Residue C229 coordinates [4Fe-4S] cluster. Iminosuccinate is bound by residues 255-257 and T272; that span reads HPE. C315 lines the [4Fe-4S] cluster pocket.

It belongs to the quinolinate synthase family. Type 2 subfamily. [4Fe-4S] cluster serves as cofactor.

Its subcellular location is the cytoplasm. The enzyme catalyses iminosuccinate + dihydroxyacetone phosphate = quinolinate + phosphate + 2 H2O + H(+). The protein operates within cofactor biosynthesis; NAD(+) biosynthesis; quinolinate from iminoaspartate: step 1/1. Catalyzes the condensation of iminoaspartate with dihydroxyacetone phosphate to form quinolinate. The protein is Quinolinate synthase of Sinorhizobium fredii (strain NBRC 101917 / NGR234).